Consider the following 227-residue polypeptide: Probable methylthioribulose-1-phosphate dehydratase (227 aa).

Residue C87 coordinates substrate. Zn(2+)-binding residues include H105 and H107. The Proton donor/acceptor role is filled by E129. Residue H185 coordinates Zn(2+).

This sequence belongs to the aldolase class II family. MtnB subfamily. It depends on Zn(2+) as a cofactor.

Its subcellular location is the cytoplasm. The catalysed reaction is 5-(methylsulfanyl)-D-ribulose 1-phosphate = 5-methylsulfanyl-2,3-dioxopentyl phosphate + H2O. Its pathway is amino-acid biosynthesis; L-methionine biosynthesis via salvage pathway; L-methionine from S-methyl-5-thio-alpha-D-ribose 1-phosphate: step 2/6. Catalyzes the dehydration of methylthioribulose-1-phosphate (MTRu-1-P) into 2,3-diketo-5-methylthiopentyl-1-phosphate (DK-MTP-1-P). In Drosophila melanogaster (Fruit fly), this protein is Probable methylthioribulose-1-phosphate dehydratase.